We begin with the raw amino-acid sequence, 363 residues long: Phospho-N-acetylmuramoyl-pentapeptide-transferase (363 aa).

Transmembrane regions (helical) follow at residues 27–47 (AGAACLTALAISLLLGNPLIA), 76–96 (TMGGVLILAALFGSTLLWADL), 97–117 (TDGYVWAVLLTTLSFGAVGFA), 137–157 (LGCEFAASLVGGYWMQSLMPA), 171–191 (WLLPLGFAFPLFAMITITGFG), 202–222 (GLAIVPVIIAALVFGLISYLV), 226–246 (VFADYLQLHAVPGTGELCVFC), 248–268 (ALVGAGLGFLWFNAPPAAVFM), 271–291 (TGSLSLGGALGAIAVAVKHEL), 292–312 (VLCIVGGLFVVETLSVIIQVF), and 340–360 (KIVIRFWIVSIVLGLCGLATL).

It belongs to the glycosyltransferase 4 family. MraY subfamily. Requires Mg(2+) as cofactor.

The protein resides in the cell inner membrane. It catalyses the reaction UDP-N-acetyl-alpha-D-muramoyl-L-alanyl-gamma-D-glutamyl-meso-2,6-diaminopimeloyl-D-alanyl-D-alanine + di-trans,octa-cis-undecaprenyl phosphate = di-trans,octa-cis-undecaprenyl diphospho-N-acetyl-alpha-D-muramoyl-L-alanyl-D-glutamyl-meso-2,6-diaminopimeloyl-D-alanyl-D-alanine + UMP. It participates in cell wall biogenesis; peptidoglycan biosynthesis. In terms of biological role, catalyzes the initial step of the lipid cycle reactions in the biosynthesis of the cell wall peptidoglycan: transfers peptidoglycan precursor phospho-MurNAc-pentapeptide from UDP-MurNAc-pentapeptide onto the lipid carrier undecaprenyl phosphate, yielding undecaprenyl-pyrophosphoryl-MurNAc-pentapeptide, known as lipid I. This chain is Phospho-N-acetylmuramoyl-pentapeptide-transferase, found in Gluconacetobacter diazotrophicus (strain ATCC 49037 / DSM 5601 / CCUG 37298 / CIP 103539 / LMG 7603 / PAl5).